A 553-amino-acid chain; its full sequence is Mucolipin-3 (553 aa).

At 1–62 (MANPEVLVSS…FWARGRKPWK (62 aa)) the chain is on the cytoplasmic side. The segment at 52 to 62 (KFWARGRKPWK) is interaction with phosphoinositides. A helical transmembrane segment spans residues 63–83 (LAIQILKIAMVTIQLVLFGLS). The Extracellular portion of the chain corresponds to 84–283 (NQMVVAFKEE…VSGSIQKNTH (200 aa)). Positions 104-118 (KGYMDRMDDTYAVYT) are extracellular/lumenal pore loop. Asparagine 138 carries an N-linked (GlcNAc...) asparagine glycan. Cysteine 159 and cysteine 185 are joined by a disulfide. The N-linked (GlcNAc...) asparagine glycan is linked to asparagine 205. A disulfide bridge links cysteine 238 with cysteine 269. A helical membrane pass occupies residues 284–304 (YMMIFDAFVILTCLASLVLCA). Residues 305 to 341 (RSVIRGLQLQQEFVNFFLLHYKKEVSASDQMEFINGW) are Cytoplasmic-facing. A helical membrane pass occupies residues 342–362 (YIMIIISDILTIVGSVLKMEI). The Extracellular segment spans residues 363 to 371 (QAKSLTSYD). Residues 372–392 (VCSILLGTSTMLVWLGVIRYL) form a helical membrane-spanning segment. Residues 393–414 (GFFAKYNLLILTLQAALPNVMR) lie on the Cytoplasmic side of the membrane. A helical transmembrane segment spans residues 415-435 (FCCCAAMIYLGYCFCGWIVLG). Residues 436 to 443 (PYHEKFRS) are Extracellular-facing. An intramembrane region (pore-forming) is located at residues 444 to 464 (LNRVSECLFSLINGDDMFSTF). The Selectivity filter signature appears at 456-459 (NGDD). Topologically, residues 465 to 475 (AKMQQKSYLVW) are extracellular. Residues 476-497 (LFSRVYLYSFISLFIYMILSLF) form a helical membrane-spanning segment. Residues 498 to 553 (IALITDTYETIKHYQQDGFPETELRKFIAECKDLPNSGKYRLEDDPPGSLLCCCKK) lie on the Cytoplasmic side of the membrane.

This sequence belongs to the transient receptor (TC 1.A.4) family. Polycystin subfamily. MCOLN3 sub-subfamily. Homotetramer. Can heterooligomerize with MCOLN1; heteromeric assemblies have different channel properties as compared to the respective homooligomers and may be tissue-specific. May heterooligomerize with TRPV5 to form a functional distinct ion channel. Interacts with GABARAPL2. In terms of processing, N-glycosylated. As to expression, expressed in the cochlea; particularly in the inner and outer hair cells (at protein level).

It is found in the early endosome membrane. Its subcellular location is the late endosome membrane. It localises to the cytoplasmic vesicle. The protein localises to the autophagosome membrane. The protein resides in the cell projection. It is found in the stereocilium membrane. The catalysed reaction is Ca(2+)(in) = Ca(2+)(out). It catalyses the reaction Mg(2+)(in) = Mg(2+)(out). It carries out the reaction K(+)(in) = K(+)(out). The enzyme catalyses Na(+)(in) = Na(+)(out). Its activity is regulated as follows. Channel activity is activated by PtdIns(3,5)P2 (phosphatidylinositol 3,5-bisphosphate). Inhibited by lumenal H(+) and Na(+). The channel pore shows dynamic behavior and undergoes spontaneous, Ca(2+)-dependent modulation when conducting Ca(2+). Its function is as follows. Nonselective cation channel probably playing a role in the regulation of membrane trafficking events. Acts as a Ca(2+)-permeable cation channel with inwardly rectifying activity. Mediates release of Ca(2+) from endosomes to the cytoplasm, contributes to endosomal acidification and is involved in the regulation of membrane trafficking and fusion in the endosomal pathway. Also permeable to Mg(2+), Na(+) and K(+). Does not seem to act as mechanosensory transduction channel in inner ear sensory hair cells. Proposed to play a critical role at the cochlear stereocilia ankle-link region during hair-bundle growth. Involved in the regulation of autophagy. Through association with GABARAPL2 may be involved in autophagosome formation possibly providing Ca(2+) for the fusion process. Through a possible and probably tissue-specific heteromerization with MCOLN1 may be at least in part involved in many lysosome-dependent cellular events. Possible heteromeric ion channel assemblies with TRPV5 show pharmacological similarity with TRPML3. This chain is Mucolipin-3 (Mcoln3), found in Mus musculus (Mouse).